The chain runs to 86 residues: Omega-theraphotoxin-Hhn1b (86 aa).

An N-terminal signal peptide occupies residues 1 to 21 (MKSIVFVALFGLALLAVVCSA). Residues 22–50 (SEDAHKELLKEVVRAMVVDKTDAVQAEER) constitute a propeptide that is removed on maturation. Disulfide bonds link C52–C66, C59–C71, and C65–C78.

Belongs to the neurotoxin 10 (Hwtx-1) family. 17 (Hntx-9) subfamily. Expressed by the venom gland.

Its subcellular location is the secreted. Its function is as follows. Ion channel inhibitor. The polypeptide is Omega-theraphotoxin-Hhn1b (Cyriopagopus hainanus (Chinese bird spider)).